A 576-amino-acid polypeptide reads, in one-letter code: Ferroportin (576 aa).

The Cytoplasmic portion of the chain corresponds to 1–23 (MPKAGEQARQGGCCGSLANYLTS). Residues 24–53 (AKFLLYLGHSLSTWGDRMWHFAVSVFLVEL) form a helical membrane-spanning segment. Asp39 and His43 together coordinate Fe cation. Topologically, residues 54-57 (YGNS) are extracellular. Residues 58 to 84 (LLLTAVYGLVVAGSVLVLGAIIGDWVD) traverse the membrane as a helical segment. The Cytoplasmic portion of the chain corresponds to 85 to 87 (KNA). The helical transmembrane segment at 88-118 (RLKVAQTSLVVQNVSVILCGIILMMVFLHKN) threads the bilayer. At 119–126 (ELLTMYHG) the chain is on the extracellular side. A helical membrane pass occupies residues 127 to 162 (WVLTFCYILIITIADVANLASTATAITIQRDWIVVV). Topologically, residues 163–164 (AG) are cytoplasmic. A helical transmembrane segment spans residues 165–195 (GDRSKLADMNATIRRIDQLTNILAPMAVGQI). The Extracellular segment spans residues 196–202 (MTFGSAV). The helical transmembrane segment at 203–229 (IGCGFISGWNLVSMCVEYFLLWKVYQK) threads the bilayer. Over 230 to 306 (TPALAVKAAL…DGWVSYYNQS (77 aa)) the chain is Cytoplasmic. Residues 307-333 (VFLAGMGLAFLYMTVLGFDCITTGYAY) traverse the membrane as a helical segment. Cys326 is a Fe cation binding site. Residues 334–338 (TQGLS) lie on the Extracellular side of the membrane. Residues 339 to 366 (GSILSILMGASAITGIMGTVAFTWLRRK) form a helical membrane-spanning segment. Residues 367–368 (CG) lie on the Cytoplasmic side of the membrane. A helical transmembrane segment spans residues 369 to 391 (LVRTGLISGFAQLSCLILCVISV). Topologically, residues 392 to 458 (FMPGSPLDLS…ETTPKSVPII (67 aa)) are extracellular. Asn439 is a glycosylation site (N-linked (GlcNAc...) asparagine). A helical transmembrane segment spans residues 459 to 488 (SVSLLFAGVIAARIGLWSFDLTVTQLLQEN). Topologically, residues 489-493 (VIESE) are cytoplasmic. The chain crosses the membrane as a helical span at residues 494–518 (RGIINGVQNSMNYLLDLLHFIMVIL). His512 is a Fe cation binding site. The Extracellular segment spans residues 519–521 (APN). The chain crosses the membrane as a helical span at residues 522–547 (PEAFGLLVLISVSFVAMGHIMYFRFA). At 548–576 (QKTLGSKLFACGADDEEVTNENQANTSVV) the chain is on the cytoplasmic side.

It belongs to the ferroportin (FP) (TC 2.A.100) family. SLC40A subfamily. As to quaternary structure, identified in a complex with STOM. Interacts with HAMP; affinity of the peptide hormone HAMP for SLC40A1 increases by 80-fold in the presence of iron and the interaction promotes SLC40A1 ubiquitination and degradation. Part of a complex composed of SLC40A1/ferroportin, TF/transferrin and HEPH/hephaestin that transfers iron from cells to transferrin. Post-translationally, polyubiquitinated by RNF217; leading to proteasomal degradation. Under conditions of high systemic iron levels, both the hormone peptide hepcidin/HAMP and holo(iron bound)-transferrin/TF induce the ubiquitination, internalization and proteasomal degradation of SLC40A1 to control iron release from cells.

The protein localises to the cell membrane. It localises to the basolateral cell membrane. It catalyses the reaction Fe(2+)(in) = Fe(2+)(out). Its activity is regulated as follows. During elevated serum iron levels, liver-derived hepcidin/HAMP negatively regulates cell surface ferroportin/SLC40A1 by inducing its ubiquitination, internalization, and degradation. Indeed, hepcidin/HAMP affinity towards ferroportin/SLC40A1 increases by 80-fold in the presence of iron. In terms of biological role, transports Fe(2+) from the inside of a cell to the outside of the cell, playing a key role for maintaining systemic iron homeostasis. Transports iron from intestinal, splenic, hepatic cells, macrophages and erythrocytes into the blood to provide iron to other tissues. Controls therefore dietary iron uptake, iron recycling by macrophages and erythrocytes, and release of iron stores in hepatocytes. When iron is in excess in serum, circulating HAMP/hepcidin levels increase resulting in a degradation of SLC40A1, thus limiting the iron efflux to plasma. The protein is Ferroportin of Canis lupus familiaris (Dog).